Consider the following 174-residue polypeptide: Crossover junction endodeoxyribonuclease RuvC (174 aa).

Catalysis depends on residues Asp8, Glu67, and Asp139. 3 residues coordinate Mg(2+): Asp8, Glu67, and Asp139.

The protein belongs to the RuvC family. As to quaternary structure, homodimer which binds Holliday junction (HJ) DNA. The HJ becomes 2-fold symmetrical on binding to RuvC with unstacked arms; it has a different conformation from HJ DNA in complex with RuvA. In the full resolvosome a probable DNA-RuvA(4)-RuvB(12)-RuvC(2) complex forms which resolves the HJ. Mg(2+) is required as a cofactor.

The protein resides in the cytoplasm. It carries out the reaction Endonucleolytic cleavage at a junction such as a reciprocal single-stranded crossover between two homologous DNA duplexes (Holliday junction).. The RuvA-RuvB-RuvC complex processes Holliday junction (HJ) DNA during genetic recombination and DNA repair. Endonuclease that resolves HJ intermediates. Cleaves cruciform DNA by making single-stranded nicks across the HJ at symmetrical positions within the homologous arms, yielding a 5'-phosphate and a 3'-hydroxyl group; requires a central core of homology in the junction. The consensus cleavage sequence is 5'-(A/T)TT(C/G)-3'. Cleavage occurs on the 3'-side of the TT dinucleotide at the point of strand exchange. HJ branch migration catalyzed by RuvA-RuvB allows RuvC to scan DNA until it finds its consensus sequence, where it cleaves and resolves the cruciform DNA. This is Crossover junction endodeoxyribonuclease RuvC from Pseudoalteromonas translucida (strain TAC 125).